Reading from the N-terminus, the 304-residue chain is uncharacterized protein (304 aa).

Residues 1–10 (MLWAHRKKRK) show a composition bias toward basic residues. The segment at 1–28 (MLWAHRKKRKAATETTEDKPLESHRAND) is disordered. Over residues 16–27 (TEDKPLESHRAN) the composition is skewed to basic and acidic residues. A Phosphoserine modification is found at S39. Residues 91–101 (KQKISGSSMTK) are compositionally biased toward polar residues. Disordered stretches follow at residues 91-115 (KQKISGSSMTKEMQRESGKSPSMED), 138-160 (SMLQRSTTHRRKGHAESRNISPE), and 190-304 (SHTV…IYGS). Residues 151 to 160 (HAESRNISPE) are compositionally biased toward basic and acidic residues. S158 carries the phosphoserine modification. Residues 195–206 (SQSRHSNQSHHS) show a composition bias toward low complexity. Positions 208-223 (PSHQSNQSHPVYSSYQ) are enriched in polar residues. Over residues 229 to 248 (HLSPQSYPSYSSHQSHPGHS) the composition is skewed to low complexity. The segment covering 249–263 (NHQGHSGLSSHQTHL) has biased composition (polar residues). The segment covering 264–292 (GHSNHQGHPGHSSHQSHQGQPGHPSHQSH) has biased composition (low complexity).

This is an uncharacterized protein from Mus musculus (Mouse).